Here is a 209-residue protein sequence, read N- to C-terminus: Yop proteins translocation protein K (209 aa).

Functionally, belongs to an operon involved in the translocation of Yop proteins across the bacterial membranes or in the specific control of this function. This is Yop proteins translocation protein K (yscK) from Yersinia enterocolitica.